Here is a 207-residue protein sequence, read N- to C-terminus: Adenylyl-sulfate kinase (207 aa).

An ATP-binding site is contributed by 39-46; that stretch reads GLSGAGKS. The active-site Phosphoserine intermediate is the S113.

Belongs to the APS kinase family.

It carries out the reaction adenosine 5'-phosphosulfate + ATP = 3'-phosphoadenylyl sulfate + ADP + H(+). It functions in the pathway sulfur metabolism; hydrogen sulfide biosynthesis; sulfite from sulfate: step 2/3. Catalyzes the synthesis of activated sulfate. This Vibrio vulnificus (strain CMCP6) protein is Adenylyl-sulfate kinase.